Here is a 241-residue protein sequence, read N- to C-terminus: MTESNETPNTPEAGDESKHRRIKSFVMRAGRMTEGQQKGLEQGTPLFVLPLADAPVDYDQVFGRSAPRSLEIGFGMGHSLLEMAAAAPDQDFIGVEVHRPGVGALLNGVLTQGLTNLRVYDCDAIEVLNRCIADNSLDRLMLFFPDPWHKARHHKRRIVQASFAELVRSKLKVGGILHMATDWEPYAEYMLEVMNVAPGYRNLAEDGKCVPRPAERPITKFERRGERLGHGVWDLKFEKLA.

The span at Met1 to Thr10 shows a compositional bias: polar residues. The segment at Met1 to Arg21 is disordered. S-adenosyl-L-methionine contacts are provided by Glu71, Glu96, Asp123, and Asp146. Asp146 is a catalytic residue. Substrate contacts are provided by residues Lys150, Asp182, and Thr219–Glu222.

Belongs to the class I-like SAM-binding methyltransferase superfamily. TrmB family.

It catalyses the reaction guanosine(46) in tRNA + S-adenosyl-L-methionine = N(7)-methylguanosine(46) in tRNA + S-adenosyl-L-homocysteine. The protein operates within tRNA modification; N(7)-methylguanine-tRNA biosynthesis. Its function is as follows. Catalyzes the formation of N(7)-methylguanine at position 46 (m7G46) in tRNA. The protein is tRNA (guanine-N(7)-)-methyltransferase of Pseudomonas fluorescens (strain SBW25).